The chain runs to 318 residues: MPNTLEQFKSITTIVADTGDIEAIKRYQPEDATTNPSLILKAAQIPDYAHLIENAIEWAKSQSDSIEQQVEDAGDKLAVNIGVEILKIVPGRISTEVDARLSFDKAGSITKAHKLIKLYKEAGIDKSRILIKLASTWEGICAAKELEQEGINCNLTLLFSFAQARACAEAGVYLISPFVGRILDWYKKDTGLEYSSVEDPGVVSVTEIYNYYKRHGFNTVVMGASFRNTGEIIELAGCDRLTIGPALLEELANSQTEVVRKLIPTETVVDAADPLTEAQFRWEFNEDPMAVEKLAEGIRNFAIDQGKLEVMLKEKLAC.

Catalysis depends on lysine 132, which acts as the Schiff-base intermediate with substrate.

This sequence belongs to the transaldolase family. Type 1 subfamily. Homodimer.

Its subcellular location is the cytoplasm. It catalyses the reaction D-sedoheptulose 7-phosphate + D-glyceraldehyde 3-phosphate = D-erythrose 4-phosphate + beta-D-fructose 6-phosphate. Its pathway is carbohydrate degradation; pentose phosphate pathway; D-glyceraldehyde 3-phosphate and beta-D-fructose 6-phosphate from D-ribose 5-phosphate and D-xylulose 5-phosphate (non-oxidative stage): step 2/3. Functionally, transaldolase is important for the balance of metabolites in the pentose-phosphate pathway. In Shewanella sediminis (strain HAW-EB3), this protein is Transaldolase.